The chain runs to 351 residues: UDP-3-O-acylglucosamine N-acyltransferase (351 aa).

The active-site Proton acceptor is the H240.

It belongs to the transferase hexapeptide repeat family. LpxD subfamily. Homotrimer.

The catalysed reaction is a UDP-3-O-[(3R)-3-hydroxyacyl]-alpha-D-glucosamine + a (3R)-hydroxyacyl-[ACP] = a UDP-2-N,3-O-bis[(3R)-3-hydroxyacyl]-alpha-D-glucosamine + holo-[ACP] + H(+). It participates in bacterial outer membrane biogenesis; LPS lipid A biosynthesis. Functionally, catalyzes the N-acylation of UDP-3-O-acylglucosamine using 3-hydroxyacyl-ACP as the acyl donor. Is involved in the biosynthesis of lipid A, a phosphorylated glycolipid that anchors the lipopolysaccharide to the outer membrane of the cell. The sequence is that of UDP-3-O-acylglucosamine N-acyltransferase from Pseudomonas syringae pv. tomato (strain ATCC BAA-871 / DC3000).